A 1160-amino-acid polypeptide reads, in one-letter code: MIKIITGRQTDPLQEKILATAIENYQQHPENETFIIVPNHIKFTTEVRAINKLASSKKQTETAVKNLHVLSFSRLAWFFLKDAEQGLPTQLDDAASAMLLTHIIEQKQDELIIFEQSNSGMVRQLYNTILQVYDGNLDLDNIDETNLDQETKSKIHDLRIIYDAFIEEIAGKFSTKNEVQVQLNDILAKNSELKNASFYFCDFSHFSLQEMLTIQILMRKAKNVTLAFKTRLGNINPKAEAGDYDYVIQQTIRRLVSFLQERDMDYVASEFPIPSEPTPREILNSLWTETVSKVDELKQVQLVKADSRYAEAYFVARTIYQQVALNNYRYRDFLILAPDLKEYETYLTPILRQNNIPFFNDLQQEMKYHPLVVLIENLFNLRDLKENPFQTQSMLAILKTHLLIPSWYKEEAEYIHDVDELENFVLAHGINHNLWKKHFADFVSAEVIRLDKIDEEVAKIDRLRGYLVDKVTNLFTKLEQEKDSQKALTIFFDFLTKNGIAERLEQWRDAANNAGDLQQAQQPEQLWDLLIQLLKDYLAINPEKFDLDEFFNMLISAFKEATFSQIPSTLDAVNLSEMGMVQTSGYKQVFIIGATSGNLPSIEKKPGFLTTENLNQLQSSFESDAYLEDNQRLNNLDQNYQFGLSLALAQDRVYISYPVLNASNEKLDPSIYYQRLQDYGAPEFSQHDLPEKMQELLSFITNPDASLGYLAYINSNTSDEAIDELLKITQKYLPQKVKAVLDASDFDNQPEDIGEDLAAELYGKNLYSSVSQLETFYENSYEYFLTYGLKLRRRLENEFDVIQAGNYFHETFDRLVKRLNEQHIDLADLSSVELEQQLNQVRDVIKDESKYAQLMNDPFNQYLFHCLDHTTSKVAQNWRKSLAETPLRAKYSELSFGLDQKIKGISLDIPDLPGNHQVNLRGKIDRVDLANFAEKDQVLAQVIDYKSSAKKFDLGMFYNGIALQMISYLDVLTNNNRFFAEEDKLSLLGAFYQTVTRQLERLNSNKLIDSSLNLRENAIDSKPKLMYTGLISNNPEILLEAEPLLDGKSSQASQLYTGVGTKARGGFKLPADRNFSEEEFQLLLEYDEYLIKEASRQILSGQIKLNPYRYGRSKNALTYSDFKDIFFFDAMLRHNQYHEISNMSKKDLLVKIKEKLGKKD.

Belongs to the helicase family. AddB/RexB type 2 subfamily. Heterodimer of AddA and RexB. The cofactor is Mg(2+).

In terms of biological role, the heterodimer acts as both an ATP-dependent DNA helicase and an ATP-dependent, dual-direction single-stranded exonuclease. Recognizes the chi site generating a DNA molecule suitable for the initiation of homologous recombination. This subunit has 5' -&gt; 3' nuclease activity but not helicase activity. The polypeptide is ATP-dependent helicase/deoxyribonuclease subunit B (Lactobacillus helveticus (strain DPC 4571)).